We begin with the raw amino-acid sequence, 159 residues long: Ribosomal RNA large subunit methyltransferase H (159 aa).

S-adenosyl-L-methionine-binding positions include isoleucine 75, glycine 108, and 127–132; that span reads FGRMTL.

Belongs to the RNA methyltransferase RlmH family. As to quaternary structure, homodimer.

It localises to the cytoplasm. It carries out the reaction pseudouridine(1915) in 23S rRNA + S-adenosyl-L-methionine = N(3)-methylpseudouridine(1915) in 23S rRNA + S-adenosyl-L-homocysteine + H(+). Its function is as follows. Specifically methylates the pseudouridine at position 1915 (m3Psi1915) in 23S rRNA. The polypeptide is Ribosomal RNA large subunit methyltransferase H (Lactococcus lactis subsp. lactis (strain IL1403) (Streptococcus lactis)).